The sequence spans 166 residues: Lipoprotein signal peptidase (166 aa).

A run of 4 helical transmembrane segments spans residues 9–29, 45–65, 71–91, and 100–120; these read ASGA…FDQL, ALTS…FGFL, WQRW…CFLL, and FSLS…DRLV. Residues aspartate 126 and aspartate 144 contribute to the active site. A helical membrane pass occupies residues 135–155; that stretch reads WHFPAFNLADSAITIGAVLLV.

The protein belongs to the peptidase A8 family.

Its subcellular location is the cell inner membrane. The enzyme catalyses Release of signal peptides from bacterial membrane prolipoproteins. Hydrolyzes -Xaa-Yaa-Zaa-|-(S,diacylglyceryl)Cys-, in which Xaa is hydrophobic (preferably Leu), and Yaa (Ala or Ser) and Zaa (Gly or Ala) have small, neutral side chains.. The protein operates within protein modification; lipoprotein biosynthesis (signal peptide cleavage). Its function is as follows. This protein specifically catalyzes the removal of signal peptides from prolipoproteins. This is Lipoprotein signal peptidase from Burkholderia ambifaria (strain ATCC BAA-244 / DSM 16087 / CCUG 44356 / LMG 19182 / AMMD) (Burkholderia cepacia (strain AMMD)).